The chain runs to 678 residues: DNA ligase (678 aa).

Residues 47–51 (DSDYD), 96–97 (SL), and Glu122 each bind NAD(+). Residue Lys124 is the N6-AMP-lysine intermediate of the active site. Positions 145, 182, 300, and 324 each coordinate NAD(+). Residues Cys418, Cys421, Cys436, and Cys442 each contribute to the Zn(2+) site. A BRCT domain is found at 602–678 (AYNESFTGKT…ILEDNLKDLL (77 aa)).

This sequence belongs to the NAD-dependent DNA ligase family. LigA subfamily. Requires Mg(2+) as cofactor. Mn(2+) serves as cofactor.

It catalyses the reaction NAD(+) + (deoxyribonucleotide)n-3'-hydroxyl + 5'-phospho-(deoxyribonucleotide)m = (deoxyribonucleotide)n+m + AMP + beta-nicotinamide D-nucleotide.. In terms of biological role, DNA ligase that catalyzes the formation of phosphodiester linkages between 5'-phosphoryl and 3'-hydroxyl groups in double-stranded DNA using NAD as a coenzyme and as the energy source for the reaction. It is essential for DNA replication and repair of damaged DNA. This is DNA ligase from Francisella tularensis subsp. holarctica (strain OSU18).